The following is a 561-amino-acid chain: Putative transport protein KPN78578_08530 (561 aa).

Transmembrane regions (helical) follow at residues 8 to 28 (LLNG…LCLG), 37 to 57 (LGNS…HFAI), 66 to 86 (FMLF…SIFF), 94 to 114 (MLAL…GKVF), and 158 to 178 (HLSL…IVGA). RCK C-terminal domains follow at residues 202–288 (LDTD…SFRN) and 292–373 (VFDR…RIGF). 5 helical membrane-spanning segments follow: residues 383-403 (LLAF…TFQF), 406-426 (FSFG…LGFL), 447-467 (FGLM…INNG), 478-498 (AGLI…AYVL), and 540-560 (AIAN…WPGL).

This sequence belongs to the AAE transporter (TC 2.A.81) family. YbjL subfamily.

It is found in the cell membrane. This Klebsiella pneumoniae subsp. pneumoniae (strain ATCC 700721 / MGH 78578) protein is Putative transport protein KPN78578_08530.